Consider the following 512-residue polypeptide: Maturase K (512 aa).

This sequence belongs to the intron maturase 2 family. MatK subfamily.

Its subcellular location is the plastid. It is found in the chloroplast. In terms of biological role, usually encoded in the trnK tRNA gene intron. Probably assists in splicing its own and other chloroplast group II introns. The chain is Maturase K from Lilium longiflorum (Trumpet lily).